A 370-amino-acid polypeptide reads, in one-letter code: GTPase Obg (370 aa).

In terms of domain architecture, Obg spans 1 to 159; it reads MKFIDEARIE…RMLRLELKVL (159 aa). The 175-residue stretch at 160-334 folds into the OBG-type G domain; that stretch reads ADVGLLGMPN…LCYAIYDYLA (175 aa). Residues 166–173, 191–195, 213–216, 284–287, and 315–317 contribute to the GTP site; these read GMPNAGKS, FTTLA, DIPG, NKLD, and SAL. The Mg(2+) site is built by Ser173 and Thr193. Residues 344–370 are disordered; the sequence is EEEDLATDVRFRDAPPADGGATPGDDA.

Belongs to the TRAFAC class OBG-HflX-like GTPase superfamily. OBG GTPase family. In terms of assembly, monomer. Mg(2+) is required as a cofactor.

Its subcellular location is the cytoplasm. Functionally, an essential GTPase which binds GTP, GDP and possibly (p)ppGpp with moderate affinity, with high nucleotide exchange rates and a fairly low GTP hydrolysis rate. Plays a role in control of the cell cycle, stress response, ribosome biogenesis and in those bacteria that undergo differentiation, in morphogenesis control. The chain is GTPase Obg from Burkholderia ambifaria (strain ATCC BAA-244 / DSM 16087 / CCUG 44356 / LMG 19182 / AMMD) (Burkholderia cepacia (strain AMMD)).